Here is a 272-residue protein sequence, read N- to C-terminus: SPbeta prophage-derived aminoglycoside N(3')-acetyltransferase-like protein YokD (272 aa).

Residues 38–44 (LSSIGWV) and glutamine 113 each bind CoA.

This sequence belongs to the antibiotic N-acetyltransferase family. As to quaternary structure, homodimer.

In terms of biological role, may contribute to antibiotic resistance. The polypeptide is SPbeta prophage-derived aminoglycoside N(3')-acetyltransferase-like protein YokD (yokD) (Bacillus subtilis (strain 168)).